The chain runs to 627 residues: Altered inheritance of mitochondria protein 9, mitochondrial (627 aa).

A mitochondrion-targeting transit peptide spans 1-43 (MIRYTVAGHSRRCVVGASKRVGAIKCITVAATKRFISNKPNEV).

The protein belongs to the AIM9 family.

The protein resides in the mitochondrion. The chain is Altered inheritance of mitochondria protein 9, mitochondrial (AIM9) from Saccharomyces cerevisiae (strain RM11-1a) (Baker's yeast).